The chain runs to 437 residues: F-box only protein 9 (437 aa).

Positions 1–26 (MSAEAEEDCHSDADRVGDEGNESPAE) are disordered. Ser2 is subject to N-acetylalanine. The segment covering 8 to 26 (DCHSDADRVGDEGNESPAE) has biased composition (basic and acidic residues). Phosphoserine is present on His10. A TPR repeat occupies 84–117 (ARELFLQAVEEEQNGALYEAIKFYRRAMQLVPDI). Residue Ser126 is modified to Phosphoserine. Positions 175 to 226 (QTHISVLPMEVLMYIFRWVVSSDLDLRSLEQLSLVCRGFYICARDPEIWRLA) constitute an F-box domain.

Part of the SCF (SKP1-CUL1-F-box) E3 ubiquitin-protein ligase complex SCF(FBXO9) composed of CUL1, SKP1, RBX1 and FBXO9. Interacts with TTI1 and TELO2; when TTI1 and TELO2 are phosphorylated by CK2.

Its subcellular location is the cytoplasm. Its pathway is protein modification; protein ubiquitination. In terms of biological role, substrate recognition component of a SCF (SKP1-CUL1-F-box protein) E3 ubiquitin-protein ligase complex which mediates the ubiquitination and subsequent proteasomal degradation of target proteins and plays a role in several biological processes such as cell cycle, cell proliferation, or maintenance of chromosome stability. Ubiquitinates mTORC1-bound TTI1 and TELO2 when they are phosphorylated by CK2 following growth factor deprivation, leading to their degradation. In contrast, does not mediate ubiquitination of TTI1 and TELO2 when they are part of the mTORC2 complex. As a consequence, mTORC1 is inactivated to restrain cell growth and protein translation, while mTORC2 is the activated due to the relief of feedback inhibition by mTORC1. Plays a role in maintaining epithelial cell survival by regulating the turn-over of chromatin modulator PRMT4 through ubiquitination and degradation by the proteasomal pathway. Also regulates PPARgamma stability by facilitating PPARgamma/PPARG ubiquitination and thereby plays a role in adipocyte differentiation. This is F-box only protein 9 (Fbxo9) from Mus musculus (Mouse).